Consider the following 964-residue polypeptide: Insulin receptor substrate 1 (964 aa).

One can recognise a PH domain in the interval Gly8 to Arg109. Residues Tyr122–Asn236 enclose the IRS-type PTB domain. Residues Leu249 to Ile268 are disordered. 3 positions are modified to phosphoserine: Ser286, Ser287, and Ser342. Tyr410 is modified (phosphotyrosine; by INSR). The YXXM motif 1 motif lies at Tyr410–Met413. The interval Ala527–Leu560 is disordered. A compositionally biased stretch (polar residues) spans Ser528–Leu560. Ser554 is modified (phosphoserine). The YXXM motif 2 signature appears at Tyr640–Met643. The span at Glu698 to Ser712 shows a compositional bias: basic and acidic residues. Residues Glu698 to His735 form a disordered region. Residues Asn713–Glu729 show a composition bias toward polar residues. Tyr907 carries the post-translational modification Phosphotyrosine; by INSR. Residues Ala921 to Thr964 form a disordered region. Ser928 and Ser931 each carry phosphoserine. Tyr944 carries the phosphotyrosine; by INSR modification. Residues Ser952–Thr964 show a composition bias toward low complexity.

In terms of assembly, bindings to phosphatidylinositol 3-kinase and SHP2.

Functionally, activates phosphatidylinositol 3-kinase when bound to the regulatory p85 subunit. May mediate the control of various cellular processes by insulin-like peptides. When phosphorylated by the insulin receptor binds specifically to various cellular proteins containing SH2 domains. Involved in control of cell proliferation, cell size, and body and organ growth throughout development. Also has a role in a signaling pathway controlling the physiological response required to endure periods of low nutrient conditions. Insulin/insulin-like growth factor (IGF) signaling pathway has a role in regulating aging and is necessary in the ovary for vitellogenic maturation. In Drosophila sechellia (Fruit fly), this protein is Insulin receptor substrate 1.